A 90-amino-acid chain; its full sequence is Transcriptional repressor SdpR (90 aa).

Residues 1-87 enclose the HTH arsR-type domain; it reads MNNVFKAISD…WMLNFINKGD (87 aa). Positions 39–62 form a DNA-binding region, H-T-H motif; that stretch reads PSISHHLNILKQAEVISDHRKGQF.

It localises to the cytoplasm. Its function is as follows. Represses the transcription of the sdpIR operon and of several other operons that probably contribute to delaying commitment to sporulation. The polypeptide is Transcriptional repressor SdpR (sdpR) (Bacillus subtilis (strain 168)).